The sequence spans 131 residues: Protein NEGATIVE REGULATOR OF RESISTANCE (131 aa).

Disordered stretches follow at residues 1–33 and 51–131; these read MDATTTDATTAKRKRPAASDIADDAPTTVDEVS and TRRL…RAPA. The Nuclear localization signal signature appears at 12–15; it reads KRKR. A compositionally biased stretch (low complexity) spans 116–131; that stretch reads PPSDAPATPRSARAPA.

This sequence belongs to the NPR1-interactor family. In terms of assembly, interacts with NPR1/NH1. Interacts with NPR2/NH2.

Its subcellular location is the nucleus. Its function is as follows. Acts as a negative regulator of disease resistance. Acts on basal resistance, age-related resistance and resistance mediated by the LRR receptor kinase XA21. Plants over-expressing NRR display enhanced susceptibility to the bacterial blight Xanthomonas oryzae pv. oryzae (Xoo). The polypeptide is Protein NEGATIVE REGULATOR OF RESISTANCE (Oryza sativa subsp. indica (Rice)).